Here is a 95-residue protein sequence, read N- to C-terminus: Small ribosomal subunit protein uS15 (95 aa).

Belongs to the universal ribosomal protein uS15 family. Part of the 30S ribosomal subunit. Forms a bridge to the 50S subunit in the 70S ribosome, contacting the 23S rRNA.

One of the primary rRNA binding proteins, it binds directly to 16S rRNA where it helps nucleate assembly of the platform of the 30S subunit by binding and bridging several RNA helices of the 16S rRNA. In terms of biological role, forms an intersubunit bridge (bridge B4) with the 23S rRNA of the 50S subunit in the ribosome. This Sulfurihydrogenibium sp. (strain YO3AOP1) protein is Small ribosomal subunit protein uS15.